The chain runs to 291 residues: Tryptophan 2,3-dioxygenase (291 aa).

Residues 51-55, Tyr-113, and Arg-117 each bind substrate; that span reads FIIQH. Residue His-240 participates in heme binding. Residue Thr-254 participates in substrate binding.

It belongs to the tryptophan 2,3-dioxygenase family. Homotetramer. Heme is required as a cofactor.

It carries out the reaction L-tryptophan + O2 = N-formyl-L-kynurenine. It participates in amino-acid degradation; L-tryptophan degradation via kynurenine pathway; L-kynurenine from L-tryptophan: step 1/2. Heme-dependent dioxygenase that catalyzes the oxidative cleavage of the L-tryptophan (L-Trp) pyrrole ring and converts L-tryptophan to N-formyl-L-kynurenine. Catalyzes the oxidative cleavage of the indole moiety. The protein is Tryptophan 2,3-dioxygenase of Myxococcus xanthus (strain DK1622).